We begin with the raw amino-acid sequence, 187 residues long: Small ribosomal subunit protein uS5 (187 aa).

A disordered region spans residues 1 to 20 (MAERENRRDRRDDRSREETP). The S5 DRBM domain occupies 22-85 (FADRLVAINR…EQAKRQMIRV (64 aa)).

It belongs to the universal ribosomal protein uS5 family. In terms of assembly, part of the 30S ribosomal subunit. Contacts proteins S4 and S8.

Its function is as follows. With S4 and S12 plays an important role in translational accuracy. In terms of biological role, located at the back of the 30S subunit body where it stabilizes the conformation of the head with respect to the body. The chain is Small ribosomal subunit protein uS5 from Cereibacter sphaeroides (strain ATCC 17029 / ATH 2.4.9) (Rhodobacter sphaeroides).